The following is a 213-amino-acid chain: ATP synthase peripheral stalk subunit OSCP, mitochondrial (213 aa).

Residues 1 to 23 constitute a mitochondrion transit peptide; sequence MAAPAVSGVSQQVRYFGTSVVRP. Positions 5–23 match the SIFI-degron motif; that stretch reads AVSGVSQQVRYFGTSVVRP. Residues K54, K60, K70, and K73 each carry the N6-acetyllysine modification. K90 is subject to N6-succinyllysine. N6-acetyllysine; alternate is present on residues K158 and K162. N6-succinyllysine; alternate is present on residues K158 and K162. K172, K176, and K192 each carry N6-acetyllysine. K199 is subject to N6-succinyllysine.

The protein belongs to the ATPase delta chain family. In terms of assembly, component of the ATP synthase complex composed at least of ATP5F1A/subunit alpha, ATP5F1B/subunit beta, ATP5MC1/subunit c (homooctomer), MT-ATP6/subunit a, MT-ATP8/subunit 8, ATP5ME/subunit e, ATP5MF/subunit f, ATP5MG/subunit g, ATP5MK/subunit k, ATP5MJ/subunit j, ATP5F1C/subunit gamma, ATP5F1D/subunit delta, ATP5F1E/subunit epsilon, ATP5PF/subunit F6, ATP5PB/subunit b, ATP5PD/subunit d, ATP5PO/subunit OSCP. ATP synthase complex consists of a soluble F(1) head domain (subunits alpha(3) and beta(3)) - the catalytic core - and a membrane F(0) domain - the membrane proton channel (subunits c, a, 8, e, f, g, k and j). These two domains are linked by a central stalk (subunits gamma, delta, and epsilon) rotating inside the F1 region and a stationary peripheral stalk (subunits F6, b, d, and OSCP). Post-translationally, acetylation at Lys-162 decreases ATP production. Deacetylated by SIRT3. In response to mitochondrial stress, the precursor protein is ubiquitinated by the SIFI complex in the cytoplasm before mitochondrial import, leading to its degradation. Within the SIFI complex, UBR4 initiates ubiquitin chain that are further elongated or branched by KCMF1.

The protein localises to the mitochondrion. It localises to the mitochondrion inner membrane. Subunit OSCP, of the mitochondrial membrane ATP synthase complex (F(1)F(0) ATP synthase or Complex V) that produces ATP from ADP in the presence of a proton gradient across the membrane which is generated by electron transport complexes of the respiratory chain. ATP synthase complex consist of a soluble F(1) head domain - the catalytic core - and a membrane F(1) domain - the membrane proton channel. These two domains are linked by a central stalk rotating inside the F(1) region and a stationary peripheral stalk. During catalysis, ATP synthesis in the catalytic domain of F(1) is coupled via a rotary mechanism of the central stalk subunits to proton translocation. In vivo, can only synthesize ATP although its ATP hydrolase activity can be activated artificially in vitro. Part of the complex F(0) domain. Part of the complex F(0) domain and the peripheric stalk, which acts as a stator to hold the catalytic alpha(3)beta(3) subcomplex and subunit a/ATP6 static relative to the rotary elements. The chain is ATP synthase peripheral stalk subunit OSCP, mitochondrial from Callithrix jacchus (White-tufted-ear marmoset).